Consider the following 173-residue polypeptide: Peptide deformylase (173 aa).

Cys-91 and His-133 together coordinate Fe cation. Glu-134 is a catalytic residue. Fe cation is bound at residue His-137.

Belongs to the polypeptide deformylase family. Fe(2+) serves as cofactor.

The enzyme catalyses N-terminal N-formyl-L-methionyl-[peptide] + H2O = N-terminal L-methionyl-[peptide] + formate. Functionally, removes the formyl group from the N-terminal Met of newly synthesized proteins. Requires at least a dipeptide for an efficient rate of reaction. N-terminal L-methionine is a prerequisite for activity but the enzyme has broad specificity at other positions. In Buchnera aphidicola subsp. Acyrthosiphon pisum (strain 5A), this protein is Peptide deformylase.